The chain runs to 313 residues: Porphobilinogen deaminase (313 aa).

Cys242 bears the S-(dipyrrolylmethanemethyl)cysteine mark.

This sequence belongs to the HMBS family. In terms of assembly, monomer. Dipyrromethane serves as cofactor.

The enzyme catalyses 4 porphobilinogen + H2O = hydroxymethylbilane + 4 NH4(+). It functions in the pathway porphyrin-containing compound metabolism; protoporphyrin-IX biosynthesis; coproporphyrinogen-III from 5-aminolevulinate: step 2/4. Its function is as follows. Tetrapolymerization of the monopyrrole PBG into the hydroxymethylbilane pre-uroporphyrinogen in several discrete steps. The sequence is that of Porphobilinogen deaminase from Escherichia coli (strain SE11).